A 176-amino-acid chain; its full sequence is Transcription termination/antitermination protein NusG (176 aa).

The KOW domain occupies 125 to 149 (GEVVRVVEGPFANFTATVEEYDVEH).

This sequence belongs to the NusG family.

Its function is as follows. Participates in transcription elongation, termination and antitermination. The polypeptide is Transcription termination/antitermination protein NusG (Helicobacter pylori (strain J99 / ATCC 700824) (Campylobacter pylori J99)).